A 552-amino-acid chain; its full sequence is MKGCLATMDKELWIERANDSLVKHFYEQQSDIEQREGFESKLTFGTAGIRGKFGLGEGRLNKFTIEKLALGLARYLNAQTNSPTIVIHYDIRHLSTEFAQIIANVLANHQITVYLPDTYKTTPELSFAVRNLNTTAGIMITASHNPKDYNGIKVYGSDGAQLSTDASELASRYIEEVGDPLQIDIPISKQNTSYIKPFPKSVTDDYMKHIQNMIGYIPKSDLQVVFTSLHGTSVPIVPELLQSLNFNQFNLVEAQCKPDPNFSSVQSANPEDHRAFDQAVELANKSHADLLISTDPDADRLGIAERDAHGHITYFNGNQIGALLLNYRIQQTSQLRHRLMIQSIVSSELTKSLARYNNVEYKEVLTGFKFIAQEIRQLDDHQNMIFAFEESYGFLSEPFVRDKDAVQIVPLIIKYASELKLYGKTLKDELEQIYQTVGRHEDTLFSHTLEGFEGKKKINAIMTKFRSNPPQEIQGLKVKAIEDYLTSEVYHLDKDTTSQINSPKSNVIRVLFDEGFIALRPSGTEPKIKLYVSLKCPNFDDVAQKINAMIFS.

S143 (phosphoserine intermediate) is an active-site residue. The Mg(2+) site is built by S143, D295, D297, and D299.

The protein belongs to the phosphohexose mutase family. Requires Mg(2+) as cofactor.

The catalysed reaction is alpha-D-glucose 1-phosphate = alpha-D-glucose 6-phosphate. It functions in the pathway glycolipid metabolism; diglucosyl-diacylglycerol biosynthesis. Catalyzes the interconversion between glucose-6-phosphate and alpha-glucose-1-phosphate. This is the first step in the biosynthesis of diglucosyl-diacylglycerol (Glc2-DAG), i.e. the predominant glycolipid found in the S.aureus membrane, which is also used as a membrane anchor for lipoteichoic acid (LTA). This chain is Phosphoglucomutase (pgcA), found in Staphylococcus aureus (strain USA300).